We begin with the raw amino-acid sequence, 83 residues long: MVTIRLARGGSKKRPFYHLTVTNSRNARDGRFVERIGFFNPVATGGEVRLSVDQERATYWLGQGAQPSERVAQLLKDAAKANA.

Belongs to the bacterial ribosomal protein bS16 family.

This is Small ribosomal subunit protein bS16 from Pseudomonas aeruginosa (strain LESB58).